Here is a 1029-residue protein sequence, read N- to C-terminus: Myosin phosphatase Rho-interacting protein (1029 aa).

The segment at 1–387 is interaction with F-actin; that stretch reads MSAAKENPCR…DRRSTESSMT (387 aa). In terms of domain architecture, PH 1 spans 43–150; sequence KPIYGGWLLL…WLEMLMVYPR (108 aa). The disordered stretch occupies residues 152-267; it reads NKQNQKKKRK…GDRVDGGRKV (116 aa). Low complexity predominate over residues 179–195; that stretch reads SSSGGSSGSSSSSSSSS. Residues S198, S224, S226, S230, and S232 each carry the phosphoserine modification. Positions 226-237 are enriched in low complexity; the sequence is SPVQSPSQSQPP. Residues 245-267 show a composition bias toward basic and acidic residues; the sequence is TGLDSKEDENILSGDRVDGGRKV. A phosphoserine mark is found at S271, S275, S294, and S297. Disordered stretches follow at residues 279–306 and 333–383; these read AKQD…SRRS and PSSD…RSTE. T300 is subject to Phosphothreonine. Positions 338–354 are enriched in basic and acidic residues; that stretch reads RQGRSERRAIPRKRDFA. Phosphoserine is present on S369. Residues 391 to 487 enclose the PH 2 domain; that stretch reads LNFKKGWLTK…WIQTIMKHVL (97 aa). The disordered stretch occupies residues 490–614; that stretch reads SAPDVTSSLP…NDGPGMEDTA (125 aa). Residues 492 to 509 are compositionally biased toward polar residues; the sequence is PDVTSSLPEGKNKSTSFD. Phosphoserine is present on S497. Basic and acidic residues predominate over residues 527–550; sequence PEQKKSRARERRREGRSKTFDWAE. Positions 550 to 828 are interaction with RHOA; the sequence is EFRPIQQALA…SVQRELEVLS (279 aa). Residues 562-571 show a composition bias toward polar residues; the sequence is RASTVGSSDS. The span at 583-592 shows a compositional bias: basic and acidic residues; the sequence is ELERERARRR. S622 is subject to Phosphoserine. T650 bears the Phosphothreonine mark. Residues 675 to 979 are a coiled coil; that stretch reads STHELTSLLE…LKAATEALGE (305 aa). The residue at position 804 (S804) is a Phosphoserine. Positions 828–883 are interaction with PPP1R12A; the sequence is SEQYSQKCLENAHLAQALEAERQALRQCQRENQELNAHNQELNNRLAAEITRLRTL. Phosphoserine is present on residues S981, S997, S1018, and S1020.

In terms of assembly, binds RHOA, PPP1R12A/MBS and PPP1R12C/MBS85 through adjacent coiled coil domains. Interacts with MYZAP. Binds F-actin through its N-terminus.

It localises to the cytoplasm. The protein resides in the cytoskeleton. Functionally, targets myosin phosphatase to the actin cytoskeleton. Required for the regulation of the actin cytoskeleton by RhoA and ROCK1. Depletion leads to an increased number of stress fibers in smooth muscle cells through stabilization of actin fibers by phosphorylated myosin. Overexpression of MRIP as well as its F-actin-binding region leads to disassembly of stress fibers in neuronal cells. This Rattus norvegicus (Rat) protein is Myosin phosphatase Rho-interacting protein (Mprip).